Here is a 507-residue protein sequence, read N- to C-terminus: Bifunctional purine biosynthesis protein PurH (507 aa).

The region spanning 1-144 is the MGS-like domain; the sequence is MKRALLSVSD…KNSDSVWAVV (144 aa).

Belongs to the PurH family.

It carries out the reaction (6R)-10-formyltetrahydrofolate + 5-amino-1-(5-phospho-beta-D-ribosyl)imidazole-4-carboxamide = 5-formamido-1-(5-phospho-D-ribosyl)imidazole-4-carboxamide + (6S)-5,6,7,8-tetrahydrofolate. The catalysed reaction is IMP + H2O = 5-formamido-1-(5-phospho-D-ribosyl)imidazole-4-carboxamide. It participates in purine metabolism; IMP biosynthesis via de novo pathway; 5-formamido-1-(5-phospho-D-ribosyl)imidazole-4-carboxamide from 5-amino-1-(5-phospho-D-ribosyl)imidazole-4-carboxamide (10-formyl THF route): step 1/1. It functions in the pathway purine metabolism; IMP biosynthesis via de novo pathway; IMP from 5-formamido-1-(5-phospho-D-ribosyl)imidazole-4-carboxamide: step 1/1. The polypeptide is Bifunctional purine biosynthesis protein PurH (Lacticaseibacillus paracasei (strain ATCC 334 / BCRC 17002 / CCUG 31169 / CIP 107868 / KCTC 3260 / NRRL B-441) (Lactobacillus paracasei)).